The chain runs to 105 residues: Small ribosomal subunit protein uS10c (105 aa).

Belongs to the universal ribosomal protein uS10 family. Part of the 30S ribosomal subunit.

It localises to the plastid. The protein localises to the chloroplast. In terms of biological role, involved in the binding of tRNA to the ribosomes. The chain is Small ribosomal subunit protein uS10c from Pyropia yezoensis (Susabi-nori).